A 1684-amino-acid polypeptide reads, in one-letter code: GRIP and coiled-coil domain-containing protein 2 (1684 aa).

Met1 bears the N-acetylmethionine mark. The disordered stretch occupies residues 1-22 (MEDLVQDGVASPATPGTGKSKL). Ser11 is subject to Phosphoserine. At Thr14 the chain carries Phosphothreonine. Residues 110–1618 (VTKMGDAHKE…REKSAANLEY (1509 aa)) are a coiled coil. 3 positions are modified to phosphoserine: Ser236, Ser1483, and Ser1487. Positions 1475–1502 (LKNEPTTRSPVSSQQSLKNLRERRNTDL) are disordered. Residues 1477–1492 (NEPTTRSPVSSQQSLK) show a composition bias toward polar residues. A mediates interaction with RAB6A region spans residues 1574–1613 (HLNGLLRETEATNAILMEQIKLLKSEIRRLERNQEREKSA). Positions 1574–1684 (HLNGLLRETE…SYLHSWSGLR (111 aa)) are mediates interaction with RAB9A. The GRIP domain maps to 1609–1659 (REKSAANLEYLKNVLLQFIFLKPGSERERLLPVINTMLQLSPEEKGKLAAV).

In terms of assembly, homodimer. Interacts (via GRIP domain) with RAB6A (preferentially in its GTP-bound form). May interact (RAB6A-dependent) with ARL1; according to PubMed:19703403, RAB6A and ARL1 are not involved in GCC2 Golgi localization as proposed by PubMed:18243103. Interacts (probably via GRIP domain) with RAB9A (preferentially in its GTP-bound form). Interacts with CLASP1 and CLASP2; recruits both proteins to membranes of the TGN. Interacts with STX16. Ubiquitous.

The protein resides in the cytoplasm. The protein localises to the golgi apparatus. It localises to the trans-Golgi network membrane. Its function is as follows. Golgin which probably tethers transport vesicles to the trans-Golgi network (TGN) and regulates vesicular transport between the endosomes and the Golgi. As a RAB9A effector it is involved in recycling of the mannose 6-phosphate receptor from the late endosomes to the TGN. May also play a role in transport between the recycling endosomes and the Golgi. Required for maintenance of the Golgi structure, it is involved in the biogenesis of noncentrosomal, Golgi-associated microtubules through recruitment of CLASP1 and CLASP2. This chain is GRIP and coiled-coil domain-containing protein 2 (GCC2), found in Homo sapiens (Human).